Consider the following 632-residue polypeptide: uncharacterized protein (632 aa).

4 helical membrane passes run 255 to 275 (LFYA…ELRV), 506 to 526 (IALL…LTSI), 566 to 586 (MIFA…SMVF), and 603 to 623 (IVVI…AVLF).

The protein resides in the cell membrane. This is an uncharacterized protein from Mycoplasma pneumoniae (strain ATCC 29342 / M129 / Subtype 1) (Mycoplasmoides pneumoniae).